The following is a 357-amino-acid chain: Phospho-N-acetylmuramoyl-pentapeptide-transferase (357 aa).

A run of 10 helical transmembrane segments spans residues 23-43 (AIFS…YFIY), 70-90 (TMGG…YCNL), 91-111 (SNIY…IGFI), 127-147 (LKWK…MIKI), 171-191 (YLYI…VNLT), 196-216 (GLAI…SLFS), 236-256 (LAIL…FNSY), 260-280 (VFMG…IAIL), 286-306 (LLII…LQII), and 334-354 (LIIV…LISL).

The protein belongs to the glycosyltransferase 4 family. MraY subfamily. Mg(2+) serves as cofactor.

The protein resides in the cell inner membrane. It carries out the reaction UDP-N-acetyl-alpha-D-muramoyl-L-alanyl-gamma-D-glutamyl-meso-2,6-diaminopimeloyl-D-alanyl-D-alanine + di-trans,octa-cis-undecaprenyl phosphate = di-trans,octa-cis-undecaprenyl diphospho-N-acetyl-alpha-D-muramoyl-L-alanyl-D-glutamyl-meso-2,6-diaminopimeloyl-D-alanyl-D-alanine + UMP. The protein operates within cell wall biogenesis; peptidoglycan biosynthesis. Catalyzes the initial step of the lipid cycle reactions in the biosynthesis of the cell wall peptidoglycan: transfers peptidoglycan precursor phospho-MurNAc-pentapeptide from UDP-MurNAc-pentapeptide onto the lipid carrier undecaprenyl phosphate, yielding undecaprenyl-pyrophosphoryl-MurNAc-pentapeptide, known as lipid I. The polypeptide is Phospho-N-acetylmuramoyl-pentapeptide-transferase (Buchnera aphidicola subsp. Acyrthosiphon pisum (strain 5A)).